The chain runs to 389 residues: Alpha-2B adrenergic receptor (389 aa).

The chain crosses the membrane as a helical span at residues 1–25 (AIAAVITFLILFTIFGNALVILAVL). At 26 to 36 (TSRSLRAPQNL) the chain is on the cytoplasmic side. A helical membrane pass occupies residues 37–62 (FLVSLAAADILVATLIIPFSLANELL). The Extracellular segment spans residues 63–72 (GYWYFWRTWC). C72 and C151 are joined by a disulfide. Residues 73 to 95 (EVYLALDVLFCTSSIVHLCAISL) traverse the membrane as a helical segment. Over 96–117 (DRYWAVSRALEYNSKRTPRRIK) the chain is Cytoplasmic. The helical transmembrane segment at 118–140 (CIILTVWLIAAAISLPPLIYKGD) threads the bilayer. Residues 141 to 156 (QGPQPRGRPQCMLNQE) lie on the Extracellular side of the membrane. The helical transmembrane segment at 157–180 (AWYILSSSIGSFFAPCLIMILVYL) threads the bilayer. Residues 181 to 353 (RIYLIAKRSN…LTREKRFTFV (173 aa)) are Cytoplasmic-facing. Disordered regions lie at residues 192–218 (RGPRAKGAPGEGESKQPHPLTAGPLAL) and 231–310 (DGEA…HLQQ). The segment covering 234-249 (ANGHSKLTGEKERETS) has biased composition (basic and acidic residues). The chain crosses the membrane as a helical span at residues 354-377 (LTVVIGVFVLCWFPFFFSYSLGAI). Residues 378–386 (CPQHCKVPH) are Extracellular-facing. The helical transmembrane segment at 387-389 (GLF) threads the bilayer.

Belongs to the G-protein coupled receptor 1 family. Adrenergic receptor subfamily. ADRA2B sub-subfamily. As to quaternary structure, interacts with RAB26. Interacts with PPP1R9B.

The protein resides in the cell membrane. Functionally, alpha-2 adrenergic receptors mediate the catecholamine-induced inhibition of adenylate cyclase through the action of G proteins. The protein is Alpha-2B adrenergic receptor (ADRA2B) of Procavia capensis habessinica (Abyssinian hyrax).